The sequence spans 297 residues: Carbamate kinase (297 aa).

The protein belongs to the carbamate kinase family.

Its subcellular location is the cytoplasm. It carries out the reaction hydrogencarbonate + NH4(+) + ATP = carbamoyl phosphate + ADP + H2O + H(+). The catalysed reaction is carbamate + ATP = carbamoyl phosphate + ADP. The enzyme catalyses hydrogencarbonate + NH4(+) = carbamate + H2O + H(+). The protein operates within nitrogen metabolism; (S)-allantoin degradation. Kinase involved in the anaerobic nitrogen utilization via the assimilation of allantoin. Catalyzes the transfer of a phosphate group from carbamoyl phosphate to ADP to produce ATP and leave carbamate, which spontaneously hydrolyzes to ammonia and hydrogencarbonate. The polypeptide is Carbamate kinase (Escherichia coli O157:H7).